A 198-amino-acid polypeptide reads, in one-letter code: Nucleoid occlusion factor SlmA (198 aa).

The HTH tetR-type domain maps to 10-70 (NRREEILQSL…SLIEFIEDSL (61 aa)). Residues 33–52 (TTAKLAASVGVSEAALYRHF) constitute a DNA-binding region (H-T-H motif). Positions 117-145 (EQDKLQGRINQLFERIEAQLRQVLREKKM) form a coiled coil.

It belongs to the nucleoid occlusion factor SlmA family. As to quaternary structure, homodimer. Interacts with FtsZ.

It is found in the cytoplasm. The protein localises to the nucleoid. In terms of biological role, required for nucleoid occlusion (NO) phenomenon, which prevents Z-ring formation and cell division over the nucleoid. Acts as a DNA-associated cell division inhibitor that binds simultaneously chromosomal DNA and FtsZ, and disrupts the assembly of FtsZ polymers. SlmA-DNA-binding sequences (SBS) are dispersed on non-Ter regions of the chromosome, preventing FtsZ polymerization at these regions. The sequence is that of Nucleoid occlusion factor SlmA from Enterobacter sp. (strain 638).